Here is a 621-residue protein sequence, read N- to C-terminus: F-box/LRR-repeat protein 4 (621 aa).

R28 carries the asymmetric dimethylarginine modification. The 56-residue stretch at N277–L332 folds into the F-box domain. LRR repeat units follow at residues E376–S397, N402–H421, S427–N448, E452–I474, N480–A501, C504–C524, L532–C558, T559–S583, and C584–S609.

As to quaternary structure, part of a SCF (SKP1-CUL1-F-box) protein ligase complex. Interacts with FAF2 and VCP. Interacts with PPTC7; this interaction promotes destruction of BNIP3 and NIX and mitophagy suppression.

It localises to the cytoplasm. It is found in the nucleus. The protein resides in the mitochondrion outer membrane. Substrate-recognition component of the mitochondria-localized SCF-FBXL4 ubiquitin E3 ligase complex that plays a role in the restriction of mitophagy by controlling the degradation of BNIP3 and NIX mitophagy receptors. Also rescues mitochondrial injury through reverting hyperactivation of DRP1-mediated mitochondrial fission. The polypeptide is F-box/LRR-repeat protein 4 (Fbxl4) (Mus musculus (Mouse)).